Here is a 222-residue protein sequence, read N- to C-terminus: Octanoyltransferase (222 aa).

Residues 35–214 (GTAPELIWLL…HLDGFLARLD (180 aa)) form the BPL/LPL catalytic domain. Substrate contacts are provided by residues 73–80 (RGGRYTYH), 145–147 (AIG), and 158–160 (GFS). C176 serves as the catalytic Acyl-thioester intermediate.

The protein belongs to the LipB family.

Its subcellular location is the cytoplasm. The catalysed reaction is octanoyl-[ACP] + L-lysyl-[protein] = N(6)-octanoyl-L-lysyl-[protein] + holo-[ACP] + H(+). It participates in protein modification; protein lipoylation via endogenous pathway; protein N(6)-(lipoyl)lysine from octanoyl-[acyl-carrier-protein]: step 1/2. Its function is as follows. Catalyzes the transfer of endogenously produced octanoic acid from octanoyl-acyl-carrier-protein onto the lipoyl domains of lipoate-dependent enzymes. Lipoyl-ACP can also act as a substrate although octanoyl-ACP is likely to be the physiological substrate. The chain is Octanoyltransferase from Novosphingobium aromaticivorans (strain ATCC 700278 / DSM 12444 / CCUG 56034 / CIP 105152 / NBRC 16084 / F199).